The primary structure comprises 139 residues: Hydrogenase maturation factor HypA (139 aa).

His2 is a binding site for Ni(2+). The Zn(2+) site is built by Cys73, Cys76, Cys110, and Cys113.

Belongs to the HypA/HybF family.

Its function is as follows. Involved in the maturation of [NiFe] hydrogenases. Required for nickel insertion into the metal center of the hydrogenase. This chain is Hydrogenase maturation factor HypA, found in Thermococcus gammatolerans (strain DSM 15229 / JCM 11827 / EJ3).